The chain runs to 345 residues: Biotin synthase (345 aa).

A Radical SAM core domain is found at 66–291 (PEVEIEGIIS…RTILRFAGGR (226 aa)). The [4Fe-4S] cluster site is built by C81, C85, and C88. Positions 124, 157, 216, and 286 each coordinate [2Fe-2S] cluster.

This sequence belongs to the radical SAM superfamily. Biotin synthase family. As to quaternary structure, homodimer. [4Fe-4S] cluster serves as cofactor. It depends on [2Fe-2S] cluster as a cofactor.

It carries out the reaction (4R,5S)-dethiobiotin + (sulfur carrier)-SH + 2 reduced [2Fe-2S]-[ferredoxin] + 2 S-adenosyl-L-methionine = (sulfur carrier)-H + biotin + 2 5'-deoxyadenosine + 2 L-methionine + 2 oxidized [2Fe-2S]-[ferredoxin]. It participates in cofactor biosynthesis; biotin biosynthesis; biotin from 7,8-diaminononanoate: step 2/2. Its function is as follows. Catalyzes the conversion of dethiobiotin (DTB) to biotin by the insertion of a sulfur atom into dethiobiotin via a radical-based mechanism. This is Biotin synthase from Mycobacterium leprae (strain Br4923).